The following is a 235-amino-acid chain: Transmembrane protein 215 (235 aa).

2 helical membrane-spanning segments follow: residues 12 to 32 (LVVA…VSGM) and 40 to 60 (IPLL…IALA). The disordered stretch occupies residues 99 to 145 (SDLESGKGSSDELAKKAGLRGKPPPQSQGEVSVASSINSPTPTEEGE). A compositionally biased stretch (polar residues) spans 125–140 (SQGEVSVASSINSPTP).

It localises to the membrane. The protein is Transmembrane protein 215 (TMEM215) of Homo sapiens (Human).